The sequence spans 177 residues: Large ribosomal subunit protein uL6 (177 aa).

It belongs to the universal ribosomal protein uL6 family. Part of the 50S ribosomal subunit.

This protein binds to the 23S rRNA, and is important in its secondary structure. It is located near the subunit interface in the base of the L7/L12 stalk, and near the tRNA binding site of the peptidyltransferase center. The chain is Large ribosomal subunit protein uL6 from Bradyrhizobium diazoefficiens (strain JCM 10833 / BCRC 13528 / IAM 13628 / NBRC 14792 / USDA 110).